An 827-amino-acid chain; its full sequence is Glycerol-3-phosphate acyltransferase (827 aa).

Residues 325–330 carry the HXXXXD motif motif; that stretch reads CHRSHM.

This sequence belongs to the GPAT/DAPAT family.

The protein localises to the cell inner membrane. It catalyses the reaction sn-glycerol 3-phosphate + an acyl-CoA = a 1-acyl-sn-glycero-3-phosphate + CoA. Its pathway is phospholipid metabolism; CDP-diacylglycerol biosynthesis; CDP-diacylglycerol from sn-glycerol 3-phosphate: step 1/3. This Shigella boydii serotype 4 (strain Sb227) protein is Glycerol-3-phosphate acyltransferase.